We begin with the raw amino-acid sequence, 356 residues long: Homoserine O-succinyltransferase (356 aa).

Cys-146 (acyl-thioester intermediate) is an active-site residue. Residues Lys-167 and Ser-196 each contribute to the substrate site. His-239 (proton acceptor) is an active-site residue. Glu-241 is a catalytic residue. Residue Arg-253 coordinates substrate.

The protein belongs to the MetA family.

The protein resides in the cytoplasm. It catalyses the reaction L-homoserine + succinyl-CoA = O-succinyl-L-homoserine + CoA. Its pathway is amino-acid biosynthesis; L-methionine biosynthesis via de novo pathway; O-succinyl-L-homoserine from L-homoserine: step 1/1. Its function is as follows. Transfers a succinyl group from succinyl-CoA to L-homoserine, forming succinyl-L-homoserine. This chain is Homoserine O-succinyltransferase, found in Thioalkalivibrio nitratireducens (strain DSM 14787 / UNIQEM 213 / ALEN2).